The chain runs to 547 residues: Chaperonin GroEL (547 aa).

ATP contacts are provided by residues 30–33, K51, 87–91, G415, and D496; these read TLGP and DGTTT.

It belongs to the chaperonin (HSP60) family. Forms a cylinder of 14 subunits composed of two heptameric rings stacked back-to-back. Interacts with the co-chaperonin GroES.

It is found in the cytoplasm. The enzyme catalyses ATP + H2O + a folded polypeptide = ADP + phosphate + an unfolded polypeptide.. Its function is as follows. Together with its co-chaperonin GroES, plays an essential role in assisting protein folding. The GroEL-GroES system forms a nano-cage that allows encapsulation of the non-native substrate proteins and provides a physical environment optimized to promote and accelerate protein folding. The polypeptide is Chaperonin GroEL (Mannheimia succiniciproducens (strain KCTC 0769BP / MBEL55E)).